A 1258-amino-acid chain; its full sequence is Regulator of G-protein signaling 22 (1258 aa).

Residues 581-604 (QQLGRSEPLNAVSSKDGGLEKGSK) form a disordered region. RGS domains are found at residues 845 to 973 (TFTD…ASRQ) and 1014 to 1138 (AFRK…TDEK). The segment at 1145–1172 (RRQEHKQKRKASDTEEDKAGKSGVKQYA) is disordered. Residues 1154–1164 (KASDTEEDKAG) are compositionally biased toward basic and acidic residues.

Interacts with GNA11, GNA12 and GNA13. As to expression, expressed testis, including in Leydig cells and spermatogenic cells from the spermatogonia to spermatid stages (at protein level).

It localises to the cytoplasm. Its subcellular location is the nucleus. In terms of biological role, inhibits signal transduction by increasing the GTPase activity of G protein alpha subunits thereby driving them into their inactive GDP-bound form. This Mus musculus (Mouse) protein is Regulator of G-protein signaling 22 (Rgs22).